A 117-amino-acid chain; its full sequence is Large ribosomal subunit protein bL20 (117 aa).

It belongs to the bacterial ribosomal protein bL20 family.

Functionally, binds directly to 23S ribosomal RNA and is necessary for the in vitro assembly process of the 50S ribosomal subunit. It is not involved in the protein synthesizing functions of that subunit. The polypeptide is Large ribosomal subunit protein bL20 (Geotalea daltonii (strain DSM 22248 / JCM 15807 / FRC-32) (Geobacter daltonii)).